A 206-amino-acid polypeptide reads, in one-letter code: MAETTIGFRCQDFVLVAAAGLNAFYYIKITDTEDKITELDSHKVVACAGENGPRTHFVEYVKCNMALKKMREHGRMISTHATASFMRNTLAGALRSRDGLYPVNCLLAGFDVPASAEDDVATGAHLYYLDYLGTLQEVPYGCHGYGAPFVTAMLDRMWRPNLTAQEGVELMQKCCDEVNKRVVVSNNTFICKAVPKDGVERVQSVS.

It belongs to the peptidase T1B family. In terms of assembly, the 26S proteasome consists of a 20S proteasome core and two 19S regulatory subunits. The 20S proteasome core is composed of 28 subunits that are arranged in four stacked rings, resulting in a barrel-shaped structure. The two end rings are each formed by seven alpha subunits, and the two central rings are each formed by seven beta subunits. The catalytic chamber with the active sites is on the inside of the barrel.

It localises to the cytoplasm. It is found in the nucleus. Functionally, non-catalytic component of the proteasome, a multicatalytic proteinase complex which is characterized by its ability to cleave peptides with Arg, Phe, Tyr, Leu, and Glu adjacent to the leaving group at neutral or slightly basic pH. The proteasome has an ATP-dependent proteolytic activity. The chain is Proteasome subunit beta type-2 (PSB4) from Trypanosoma brucei brucei.